We begin with the raw amino-acid sequence, 395 residues long: 1-deoxy-D-xylulose 5-phosphate reductoisomerase (395 aa).

NADPH is bound by residues Thr13, Gly14, Ser15, Ile16, Lys40, and Asn127. Residue Lys128 participates in 1-deoxy-D-xylulose 5-phosphate binding. Glu129 contacts NADPH. Asp153 serves as a coordination point for Mn(2+). Residues Ser154, Glu155, Ser184, and His207 each coordinate 1-deoxy-D-xylulose 5-phosphate. Position 155 (Glu155) interacts with Mn(2+). Residue Gly213 coordinates NADPH. 1-deoxy-D-xylulose 5-phosphate-binding residues include Ser220, Asn225, Lys226, and Glu229. Position 229 (Glu229) interacts with Mn(2+).

This sequence belongs to the DXR family. The cofactor is Mg(2+). Mn(2+) is required as a cofactor.

It catalyses the reaction 2-C-methyl-D-erythritol 4-phosphate + NADP(+) = 1-deoxy-D-xylulose 5-phosphate + NADPH + H(+). It functions in the pathway isoprenoid biosynthesis; isopentenyl diphosphate biosynthesis via DXP pathway; isopentenyl diphosphate from 1-deoxy-D-xylulose 5-phosphate: step 1/6. In terms of biological role, catalyzes the NADPH-dependent rearrangement and reduction of 1-deoxy-D-xylulose-5-phosphate (DXP) to 2-C-methyl-D-erythritol 4-phosphate (MEP). The sequence is that of 1-deoxy-D-xylulose 5-phosphate reductoisomerase from Nitrosospira multiformis (strain ATCC 25196 / NCIMB 11849 / C 71).